The sequence spans 194 residues: uncharacterized protein (194 aa).

Positions glutamine 45–valine 138 are disordered. Serine 69 and serine 76 each carry phosphoserine. Residues proline 97–proline 106 are compositionally biased toward pro residues. A compositionally biased stretch (low complexity) spans glycine 107–arginine 116. Positions leucine 117 to arginine 128 are enriched in gly residues.

This is an uncharacterized protein from Homo sapiens (Human).